Reading from the N-terminus, the 37-residue chain is Chorion class CB protein PCH12 (37 aa).

Residues 1–26 (DGIFPTVGAGDVWYGCGDGAVGIVAE) are central domain. Residues 27–37 (TPFASTTTNPA) are right arm.

The protein belongs to the chorion protein family.

Functionally, this protein is one of many from the eggshell of the silk moth. In Antheraea polyphemus (Polyphemus moth), this protein is Chorion class CB protein PCH12.